A 263-amino-acid polypeptide reads, in one-letter code: Malonyl-[acyl-carrier protein] O-methyltransferase (263 aa).

It belongs to the methyltransferase superfamily.

It catalyses the reaction malonyl-[ACP] + S-adenosyl-L-methionine = malonyl-[ACP] methyl ester + S-adenosyl-L-homocysteine. The protein operates within cofactor biosynthesis; biotin biosynthesis. Converts the free carboxyl group of a malonyl-thioester to its methyl ester by transfer of a methyl group from S-adenosyl-L-methionine (SAM). It allows to synthesize pimeloyl-ACP via the fatty acid synthetic pathway. This chain is Malonyl-[acyl-carrier protein] O-methyltransferase, found in Chlorobium luteolum (strain DSM 273 / BCRC 81028 / 2530) (Pelodictyon luteolum).